A 263-amino-acid chain; its full sequence is Palmitoyltransferase ZDHHC21 (263 aa).

Topologically, residues 1–4 (MKMR) are cytoplasmic. A helical transmembrane segment spans residues 5 to 25 (LHFVVDPMGWFCMSMVFFVWI). Residues 26-44 (YNSFLIPKLVLLPHYAEGH) are Extracellular-facing. A helical membrane pass occupies residues 45 to 65 (ITAEPVICYYLASLLCFSALF). Residues 66-131 (RASTTDPGKL…WINNCVGEDN (66 aa)) lie on the Cytoplasmic side of the membrane. Residues 90 to 140 (ELCNKCNMMRPKRSHHCSRCGHCVRRMDHHCPWINNCVGEDNHWLFLQLCF) form the DHHC domain. C120 acts as the S-palmitoyl cysteine intermediate in catalysis. A helical membrane pass occupies residues 132-152 (HWLFLQLCFYTQVLSFYTLVL). The Extracellular portion of the chain corresponds to 153–181 (DFCQYYYFLPLSSVDQADFAVHHELALLR). The chain crosses the membrane as a helical span at residues 182 to 202 (VSCFMGLIMFGGISSLFYTQV). Residues 203 to 263 (KGILTDTTTI…KLNLTIRSHV (61 aa)) are Cytoplasmic-facing.

The protein belongs to the DHHC palmitoyltransferase family.

The protein resides in the golgi apparatus membrane. The protein localises to the golgi apparatus. Its subcellular location is the cis-Golgi network membrane. It is found in the cell membrane. It carries out the reaction L-cysteinyl-[protein] + hexadecanoyl-CoA = S-hexadecanoyl-L-cysteinyl-[protein] + CoA. Palmitoyltransferase that catalyzes the addition of palmitate onto various protein substrates. This is Palmitoyltransferase ZDHHC21 from Danio rerio (Zebrafish).